The primary structure comprises 426 residues: Lipase 7 (426 aa).

The first 15 residues, 1–15 (MFVFLALITLTTCLQ), serve as a signal peptide directing secretion. Asn-74, Asn-175, and Asn-179 each carry an N-linked (GlcNAc...) asparagine glycan. 2 cysteine pairs are disulfide-bonded: Cys-108–Cys-269 and Cys-341–Cys-385. Ser-190 (charge relay system) is an active-site residue. The N-linked (GlcNAc...) asparagine glycan is linked to Asn-223. His-358 (charge relay system) is an active-site residue. Asn-378, Asn-379, Asn-422, and Asn-423 each carry an N-linked (GlcNAc...) asparagine glycan.

The protein belongs to the AB hydrolase superfamily. Lipase family. Class Lip subfamily.

It catalyses the reaction a triacylglycerol + H2O = a diacylglycerol + a fatty acid + H(+). Its function is as follows. Secreted lipase that is able to hydrolze both the neutral triacylglycerols and the monopalmitate ester Tween 40, allowing the use of hydrolyzed products as carbon sources. Has broad lipolytic activity, which may be important for colonization and subsequent infection, therefore contributing to the persistence and virulence in human tissue. The polypeptide is Lipase 7 (Candida albicans (strain SC5314 / ATCC MYA-2876) (Yeast)).